The following is a 301-amino-acid chain: Nucleotide-binding protein Noca_2527 (301 aa).

Position 26-33 (Gly26–Ser33) interacts with ATP. Residue Asp77–Ser80 participates in GTP binding.

It belongs to the RapZ-like family.

Displays ATPase and GTPase activities. This is Nucleotide-binding protein Noca_2527 from Nocardioides sp. (strain ATCC BAA-499 / JS614).